The chain runs to 432 residues: Competence protein ComFA (432 aa).

Zn(2+) is bound by residues Cys40, Cys43, Cys60, and Cys63. Residues 107 to 257 (LQAVDKQKPT…RLGELKRLNL (151 aa)) form the Helicase ATP-binding domain. 120–127 (AVTGAGKT) serves as a coordination point for ATP. The short motif at 205–208 (DEVD) is the DEAD box element. Residues 289–432 (KLKSYIEKQR…IQMMNKEAGL (144 aa)) form the Helicase C-terminal domain.

It belongs to the DEAD box helicase family. Monomer and dimer in solution. Interacts with DprA and ComFC; ComFA-ComFC form rings about 150 Angstroms in diameter with apparent 6-fold symmetry. It depends on Zn(2+) as a cofactor.

It is found in the cytoplasm. Its function is as follows. Involved in transformation (genetic competence for DNA uptake). DNA uptake is energy dependent, this protein may provide the driving force for DNA uptake. Does not have helicase activity, translocates on single-stranded (ss)DNA in a 5'-3' direction in an ATP-dependent manner, but does not unwind double-stranded (ds)DNA (tested with 5'- and 3'-overhang dsDNA). ATP hydrolysis causes the release of ssDNA from ComFA. A ssDNA-stimulated ATPase; dsDNA does not stimulate ATPase. ATP hydrolysis causes the release of ssDNA from ComFA. ComFC has no effect on ATPase activity. Binds ssDNA but only very poorly to dsDNA in the absence of ATP. Binding to ssDNA does not require free DNA ends. The sequence is that of Competence protein ComFA from Streptococcus pneumoniae (strain ATCC BAA-255 / R6).